An 80-amino-acid chain; its full sequence is Conotoxin ArMKLT2-0321 (80 aa).

An N-terminal signal peptide occupies residues 1–21 (MKLTCVLIIAMLFLIVCQLNT). Positions 22–48 (ADDSTDKQEYRAVKLRDAMRNFKGSKR) are excised as a propeptide. Disulfide bonds link C50/C63, C57/C68, and C62/C77.

This sequence belongs to the conotoxin O1 superfamily. Expressed by the venom duct.

It localises to the secreted. In Conus arenatus (Sand-dusted cone), this protein is Conotoxin ArMKLT2-0321.